A 137-amino-acid polypeptide reads, in one-letter code: Glutamate mutase sigma subunit (137 aa).

Residues 3–137 form the B12-binding domain; sequence EVNLVLGVIG…KALKEDLGLM (135 aa). Adenosylcob(III)alamin-binding positions include 13–17, His-16, 61–63, and 93–97; these read ADVHA, SSL, and NLVVG.

This sequence belongs to the methylaspartate mutase GlmS subunit family. As to quaternary structure, heterotetramer composed of 2 epsilon subunits (GlmE) and 2 sigma subunits (GlmS). GlmE exists as a homodimer and GlmS as a monomer. Requires adenosylcob(III)alamin as cofactor.

The enzyme catalyses (2S,3S)-3-methyl-L-aspartate = L-glutamate. The protein operates within amino-acid degradation; L-glutamate degradation via mesaconate pathway; acetate and pyruvate from L-glutamate: step 1/4. Catalyzes the carbon skeleton rearrangement of L-glutamate to L-threo-3-methylaspartate ((2S,3S)-3-methylaspartate). This Carboxydothermus hydrogenoformans (strain ATCC BAA-161 / DSM 6008 / Z-2901) protein is Glutamate mutase sigma subunit.